The primary structure comprises 632 residues: Palmitoyltransferase ZDHHC17 (632 aa).

The Cytoplasmic portion of the chain corresponds to 1–304 (MQREEGFNTK…LKADKEFRQK (304 aa)). Residues 11–305 (MADGPDEYDT…KADKEFRQKV (295 aa)) form a necessary and sufficient for interaction with DNAJC5 and SNAP25 region. ANK repeat units lie at residues 51–86 (THID…VRQP), 89–118 (ENVT…IVDQ), 123–152 (LNST…DPSL), 156–185 (EGCS…DVDM), 189–219 (NGMT…SVNL), 224–253 (HKNT…NVDA), and 257–286 (KGES…AKGY). The next 2 helical transmembrane spans lie at 305-325 (VMLG…DLNI) and 326-346 (DSWL…QFLS). At 347–357 (KSFFDHSMHSA) the chain is on the cytoplasmic side. The helical transmembrane segment at 358–378 (LPLGIYLATKFWMYVTWFFWF) threads the bilayer. Residues 379-381 (WND) are Lumenal-facing. The chain crosses the membrane as a helical span at residues 382–402 (LNFLFIHLPFLANSVALFYNF). Over 403–480 (GKSWKSDPGI…GNCVGAGNHR (78 aa)) the chain is Cytoplasmic. The DHHC domain maps to 437 to 487 (IFCSTCLIRKPVRSKHCGVCNRCIAKFDHHCPWVGNCVGAGNHRYFMGYLF). C467 acts as the S-palmitoyl cysteine intermediate in catalysis. Residues 481-501 (YFMGYLFFLLFMICWMIYGCI) form a helical membrane-spanning segment. At 502 to 529 (SYWGLHCETTYTKDGFWTYITQIATCSP) the chain is on the lumenal side. Residues 530–550 (WMFWMFLNSVFHFMWVAVLLM) form a helical membrane-spanning segment. Topologically, residues 551 to 632 (CQMYQISCLG…QISGSGYQLV (82 aa)) are cytoplasmic.

It belongs to the DHHC palmitoyltransferase family. AKR/ZDHHC17 subfamily. Interacts (via ANK repeats) with numerous proteins (via the consensus sequence motif [VIAP]-[VIT]-x-x-Q-P). Interacts (via ANK repeats) with CLIP3. Interacts (via ANK repeats) with HTT; this interaction is inversely correlated to the length of the polyglutamine tract added to the huntingtin protein in Huntington disease. Interacts (via ANK repeats) with DNAJC5 (via C-terminus). Interacts (via ANK repeats) with MAP6. Interacts (via ANK repeats) with SNAP23. Interacts (via ANK repeats) with SNAP25. Interacts (via ANK repeats) with EVL. Interacts with SPRED1 and SPRED3. Interacts with GPM6A and OPTN. May interact (via ANK repeats) with SPRED2. May interact with NTRK1; may regulate its localization and function. Autopalmitoylated. Autopalmitoylation has a regulatory role in ZDHHC17-mediated Mg(2+) transport. Expressed in all brain regions. Expression is highest in the cortex, cerebellum, occipital lobe and caudate and lowest in the spinal cord. Expression is also seen in testis, pancreas, heart and kidney.

Its subcellular location is the golgi apparatus membrane. It localises to the cytoplasmic vesicle membrane. The protein resides in the presynaptic cell membrane. The enzyme catalyses L-cysteinyl-[protein] + hexadecanoyl-CoA = S-hexadecanoyl-L-cysteinyl-[protein] + CoA. It catalyses the reaction L-cysteinyl-[protein] + tetradecanoyl-CoA = S-tetradecanoyl-L-cysteinyl-[protein] + CoA. The catalysed reaction is L-cysteinyl-[protein] + octadecanoyl-CoA = S-octadecanoyl-L-cysteinyl-[protein] + CoA. Functionally, palmitoyltransferase that catalyzes the addition of palmitate onto various protein substrates and is involved in a variety of cellular processes. Has no stringent fatty acid selectivity and in addition to palmitate can also transfer onto target proteins myristate from tetradecanoyl-CoA and stearate from octadecanoyl-CoA. Palmitoyltransferase specific for a subset of neuronal proteins, including SNAP25, DLG4/PSD95, GAD2, SYT1 and HTT. Also palmitoylates neuronal protein GPM6A as well as SPRED1 and SPRED3. Could also play a role in axonogenesis through the regulation of NTRK1 and the downstream ERK1/ERK2 signaling cascade. May be involved in the sorting or targeting of critical proteins involved in the initiating events of endocytosis at the plasma membrane. May play a role in Mg(2+) transport. Could also palmitoylate DNAJC5 and regulate its localization to the Golgi membrane. Palmitoylates CASP6, thereby preventing its dimerization and subsequent activation. The polypeptide is Palmitoyltransferase ZDHHC17 (Homo sapiens (Human)).